The chain runs to 216 residues: Peptide deformylase 1 (216 aa).

Fe cation is bound by residues cysteine 135 and histidine 177. Residue glutamate 178 is part of the active site. Histidine 181 contributes to the Fe cation binding site.

The protein belongs to the polypeptide deformylase family. Requires Fe(2+) as cofactor.

The enzyme catalyses N-terminal N-formyl-L-methionyl-[peptide] + H2O = N-terminal L-methionyl-[peptide] + formate. Removes the formyl group from the N-terminal Met of newly synthesized proteins. Requires at least a dipeptide for an efficient rate of reaction. N-terminal L-methionine is a prerequisite for activity but the enzyme has broad specificity at other positions. This is Peptide deformylase 1 from Streptomyces avermitilis (strain ATCC 31267 / DSM 46492 / JCM 5070 / NBRC 14893 / NCIMB 12804 / NRRL 8165 / MA-4680).